A 124-amino-acid polypeptide reads, in one-letter code: Large ribosomal subunit protein bL20 (124 aa).

The protein belongs to the bacterial ribosomal protein bL20 family.

Functionally, binds directly to 23S ribosomal RNA and is necessary for the in vitro assembly process of the 50S ribosomal subunit. It is not involved in the protein synthesizing functions of that subunit. This Ehrlichia chaffeensis (strain ATCC CRL-10679 / Arkansas) protein is Large ribosomal subunit protein bL20.